The following is a 565-amino-acid chain: Putative serine protease pcp-1 (565 aa).

A signal peptide spans 1 to 17; the sequence is MRWFLVLLLVALVSVEA. Asn-69, Asn-107, and Asn-126 each carry an N-linked (GlcNAc...) asparagine glycan. Ser-177 functions as the Charge relay system in the catalytic mechanism. Residues Asn-240, Asn-244, Asn-257, Asn-271, Asn-319, and Asn-347 are each glycosylated (N-linked (GlcNAc...) asparagine). Catalysis depends on charge relay system residues Asp-451 and His-479.

This sequence belongs to the peptidase S28 family.

This chain is Putative serine protease pcp-1 (pcp-1), found in Caenorhabditis elegans.